The following is a 400-amino-acid chain: MKNYHAPDEKGFFGEHGGLYVSETLIPALQELADAYKAAKNDPEFWAEFRCDLKHYVGRPSPVYHAARLSEHLGGAQIWLKREDLNHTGAHKVNNTIGQALLAKRMGKKRVIAETGAGQHGVASATVAARFGMTCDVYMGADDIQRQMPNVFRMKLLGANVVGVESGSRTLKDAMNEAMREWVARVDDTFYIIGTAAGPAPYPEMVRDFQCVIGNEAKAQMQEAIGRQPDVAVACVGGGSNAIGLFHPYIGEENVRLVGVEAGGLGVNTPDHAAPITSGAPIGVLHGFRSYLMQDENGQVLGTHSVSAGLDYPGIGPEHSHLHDIKRVEYTVAKDDEALEAFDLLCRFEGIIPALESSHAVAWAVKNAPKMGKDQVILVNLSGRGDKDINTVAKLKGIKL.

Lys92 carries the N6-(pyridoxal phosphate)lysine modification.

The protein belongs to the TrpB family. In terms of assembly, tetramer of two alpha and two beta chains. It depends on pyridoxal 5'-phosphate as a cofactor.

The catalysed reaction is (1S,2R)-1-C-(indol-3-yl)glycerol 3-phosphate + L-serine = D-glyceraldehyde 3-phosphate + L-tryptophan + H2O. It functions in the pathway amino-acid biosynthesis; L-tryptophan biosynthesis; L-tryptophan from chorismate: step 5/5. Its function is as follows. The beta subunit is responsible for the synthesis of L-tryptophan from indole and L-serine. This chain is Tryptophan synthase beta chain, found in Neisseria meningitidis serogroup C (strain 053442).